Consider the following 505-residue polypeptide: Maturase K (505 aa).

This sequence belongs to the intron maturase 2 family. MatK subfamily.

It localises to the plastid. It is found in the chloroplast. Its function is as follows. Usually encoded in the trnK tRNA gene intron. Probably assists in splicing its own and other chloroplast group II introns. This chain is Maturase K, found in Calycanthus floridus (Eastern sweetshrub).